We begin with the raw amino-acid sequence, 1479 residues long: Protein CHROMATIN REMODELING 20 (1479 aa).

A coiled-coil region spans residues glutamate 19–arginine 49. Positions glutamate 40–glutamine 55 are enriched in basic and acidic residues. A disordered region spans residues glutamate 40–serine 109. The segment covering aspartate 76–phenylalanine 86 has biased composition (low complexity). Basic and acidic residues predominate over residues isoleucine 94–serine 109. Positions serine 109–leucine 199 form a coiled coil. The ADD domain occupies arginine 472–serine 601. A GATA-type; atypical zinc finger spans residues arginine 483–aspartate 514. The PHD-type; atypical zinc-finger motif lies at glutamate 524–proline 577. Residues leucine 578–serine 598 adopt a coiled-coil conformation. The tract at residues serine 594 to aspartate 615 is disordered. Positions serine 598–aspartate 615 are enriched in low complexity. The 184-residue stretch at valine 741–glycine 924 folds into the Helicase ATP-binding domain. Histidine 754–threonine 761 is a binding site for ATP. Positions aspartate 875 to histidine 878 match the DEAH box motif. One can recognise a Helicase C-terminal domain in the interval aspartate 1122 to glutamate 1290. Residues serine 1400 to phenylalanine 1423 are disordered.

It belongs to the SNF2/RAD54 helicase family.

The protein resides in the nucleus. The protein localises to the chromosome. It is found in the telomere. Involved in transcriptional regulation and chromatin remodeling. Facilitates DNA replication in multiple cellular environments and is required for efficient replication of a subset of genomic loci. Binds to DNA tandem repeat sequences in both telomeres and euchromatin and in vitro binds DNA quadruplex structures. May help stabilizing G-rich regions into regular chromatin structures by remodeling G4 DNA and incorporating H3.3-containing nucleosomes. Involved in DNA repair of gamma-irradiation-mediated damages. This Arabidopsis thaliana (Mouse-ear cress) protein is Protein CHROMATIN REMODELING 20.